A 335-amino-acid polypeptide reads, in one-letter code: Erlin-2 (335 aa).

Residues 1 to 2 lie on the Cytoplasmic side of the membrane; sequence MS. The helical transmembrane segment at 3–23 threads the bilayer; sequence HAGAIAAIGVALIAAALFSAI. The Lumenal segment spans residues 24–335; the sequence is HKIEEGHVGV…ALNEPAVGDE (312 aa). N106 is a glycosylation site (N-linked (GlcNAc...) asparagine). Residues 310–321 are compositionally biased toward polar residues; the sequence is AGPSVQSATLLQ. The interval 310 to 335 is disordered; the sequence is AGPSVQSATLLQDDSPALNEPAVGDE.

Belongs to the band 7/mec-2 family.

The protein resides in the endoplasmic reticulum membrane. Mediates the endoplasmic reticulum-associated degradation (ERAD) of inositol 1,4,5-trisphosphate receptors (IP3Rs). Promotes sterol-accelerated ERAD of HMGCR. Involved in regulation of cellular cholesterol homeostasis by regulation the SREBP signaling pathway. The polypeptide is Erlin-2 (erlin2) (Xenopus tropicalis (Western clawed frog)).